The primary structure comprises 118 residues: Late cornified envelope protein 1C (118 aa).

Residues 1–10 are compositionally biased toward low complexity; the sequence is MSCQQSQQQC. Disordered regions lie at residues 1 to 23 and 87 to 118; these read MSCQ…CPPK and CHRP…GGCC. Positions 11 to 23 are enriched in pro residues; the sequence is QPPPKCTPKCPPK. Residues 90 to 103 are compositionally biased toward low complexity; that stretch reads PQSSGCCSQPSGGS. Over residues 104–118 the composition is skewed to gly residues; it reads SCCGGGSGQHSGGCC.

Belongs to the LCE family. Interacts with CYSRT1. In terms of tissue distribution, skin-specific. Expression was readily detected in adult trunk skin, adult arm skin, fetal skin, penal skin, vulva, esophagus and tongue. Not expressed in the cervix, rectum, lung, colon, or placenta.

In terms of biological role, precursors of the cornified envelope of the stratum corneum. The chain is Late cornified envelope protein 1C (LCE1C) from Homo sapiens (Human).